The primary structure comprises 659 residues: Biosynthetic arginine decarboxylase (659 aa).

Residue Lys128 is modified to N6-(pyridoxal phosphate)lysine. 308-318 (FDVGGGLGVDY) is a binding site for substrate.

It belongs to the Orn/Lys/Arg decarboxylase class-II family. SpeA subfamily. Mg(2+) serves as cofactor. The cofactor is pyridoxal 5'-phosphate.

It carries out the reaction L-arginine + H(+) = agmatine + CO2. Its pathway is amine and polyamine biosynthesis; agmatine biosynthesis; agmatine from L-arginine: step 1/1. Its function is as follows. Catalyzes the biosynthesis of agmatine from arginine. In Yersinia pestis, this protein is Biosynthetic arginine decarboxylase.